The primary structure comprises 368 residues: Probable staphylococcal-like nuclease CAN2 (368 aa).

Gly2 is lipidated: N-myristoyl glycine. The S-palmitoyl cysteine moiety is linked to residue Cys7. A disordered region spans residues 16–56 (DHYPYYKPTSRPHYQPPHYHGQPAAPPAPLQQQHLGPHGVT). A compositionally biased stretch (low complexity) spans 27-38 (PHYQPPHYHGQP). Positions 168–344 (NTLPVYDKCI…RAANRGLWAS (177 aa)) constitute a TNase-like domain. Residue Asp181 coordinates Ca(2+). The active site involves Arg251. Residue Asp256 participates in Ca(2+) binding. Residues Glu259 and Arg293 contribute to the active site.

The protein belongs to the thermonuclease family. Ca(2+) serves as cofactor.

The protein localises to the cell membrane. Enzyme that catalyzes the hydrolysis of both DNA and RNA at the 5' position of the phosphodiester bond. This is Probable staphylococcal-like nuclease CAN2 from Oryza sativa subsp. japonica (Rice).